Here is a 138-residue protein sequence, read N- to C-terminus: Single-stranded DNA-binding protein 3 (138 aa).

The SSB domain occupies Met-1 to Glu-104. The segment covering Ser-105–Ser-121 has biased composition (low complexity). The disordered stretch occupies residues Ser-105 to Phe-138. The Important for interaction with partner proteins motif lies at Asp-133 to Phe-138.

As to quaternary structure, homotetramer.

In terms of biological role, plays an important role in DNA replication, recombination and repair. Binds to ssDNA and to an array of partner proteins to recruit them to their sites of action during DNA metabolism. The sequence is that of Single-stranded DNA-binding protein 3 (ssb3) from Streptococcus agalactiae serotype V (strain ATCC BAA-611 / 2603 V/R).